We begin with the raw amino-acid sequence, 506 residues long: Spindle pole body protein CSA6 (506 aa).

4 disordered regions span residues 18 to 121 (SPIK…PNEN), 252 to 276 (EKHN…VETQ), 329 to 429 (PSSP…YSIR), and 447 to 470 (KNDQ…EEKV). The span at 38 to 48 (IDLRDYMDRQK) shows a compositional bias: basic and acidic residues. Polar residues predominate over residues 50–59 (SRNYSDSEYT). The segment covering 63–72 (IKREKPETKQ) has biased composition (basic and acidic residues). Residues 94-119 (PTKNYSQHVMQERSAPNSPQKKSLPN) show a composition bias toward polar residues. 2 stretches are compositionally biased toward polar residues: residues 330–353 (SSPN…SVNL) and 361–389 (QPSH…NPSP). 2 stretches are compositionally biased toward basic and acidic residues: residues 412–422 (EWTREREERDG) and 461–470 (TDGKEEEEKV).

It is found in the cytoplasm. It localises to the cytoskeleton. The protein localises to the microtubule organizing center. The protein resides in the spindle pole body. In terms of biological role, plays a role in mitotic spindle pole body organization, possibly at the point of spindle pole body separation. Required for mitotic exit. The chain is Spindle pole body protein CSA6 from Candida tropicalis (strain ATCC MYA-3404 / T1) (Yeast).